A 319-amino-acid chain; its full sequence is Ribose-phosphate pyrophosphokinase (319 aa).

ATP contacts are provided by residues 40-42 and 99-100; these read DGE and RQ. Mg(2+) is bound by residues H134 and D174. Residue K198 is part of the active site. D-ribose 5-phosphate contacts are provided by residues R200, D224, and 228 to 232; that span reads DTAGT.

The protein belongs to the ribose-phosphate pyrophosphokinase family. Class I subfamily. In terms of assembly, homohexamer. Mg(2+) is required as a cofactor.

It localises to the cytoplasm. The enzyme catalyses D-ribose 5-phosphate + ATP = 5-phospho-alpha-D-ribose 1-diphosphate + AMP + H(+). The protein operates within metabolic intermediate biosynthesis; 5-phospho-alpha-D-ribose 1-diphosphate biosynthesis; 5-phospho-alpha-D-ribose 1-diphosphate from D-ribose 5-phosphate (route I): step 1/1. Its function is as follows. Involved in the biosynthesis of the central metabolite phospho-alpha-D-ribosyl-1-pyrophosphate (PRPP) via the transfer of pyrophosphoryl group from ATP to 1-hydroxyl of ribose-5-phosphate (Rib-5-P). This is Ribose-phosphate pyrophosphokinase from Xanthomonas axonopodis pv. citri (strain 306).